We begin with the raw amino-acid sequence, 162 residues long: Phosphopantetheine adenylyltransferase (162 aa).

Thr14 contributes to the substrate binding site. ATP is bound by residues 14-15 (TF) and His22. 3 residues coordinate substrate: Lys46, Leu78, and Arg92. Residues 93–95 (GLR), Glu103, and 128–134 (HSFISSS) each bind ATP.

It belongs to the bacterial CoaD family. As to quaternary structure, homohexamer. The cofactor is Mg(2+).

The protein resides in the cytoplasm. The enzyme catalyses (R)-4'-phosphopantetheine + ATP + H(+) = 3'-dephospho-CoA + diphosphate. Its pathway is cofactor biosynthesis; coenzyme A biosynthesis; CoA from (R)-pantothenate: step 4/5. Functionally, reversibly transfers an adenylyl group from ATP to 4'-phosphopantetheine, yielding dephospho-CoA (dPCoA) and pyrophosphate. In Xylella fastidiosa (strain 9a5c), this protein is Phosphopantetheine adenylyltransferase.